The sequence spans 1597 residues: Collagen alpha-1(XVII) chain (1597 aa).

Disordered stretches follow at residues 1–155 (MDVT…PSTR) and 168–188 (GSRSASVSPTRNSSNTLPIPK). Over 1–468 (MDVTKKNKRD…CGSCCSWWKW (468 aa)) the chain is Cytoplasmic. The segment at 1 to 567 (MDVTKKNKRD…AEQENGNLRG (567 aa)) is nonhelical region (NC16A). Basic and acidic residues predominate over residues 9 to 19 (RDGSEVTERII). 3 stretches are compositionally biased toward polar residues: residues 58 to 96 (THGSSGYINSSGSTRGNASTSSYRRAHSPASTLPNSPGS), 111 to 120 (EGSSSGNSSP), and 170 to 184 (RSASVSPTRNSSNTL). Positions 146-231 (RLQSASPSTR…WSSTLPAGSS (86 aa)) are necessary for interaction with DST and for the recruitment of DST to hemidesmosome. The helical; Signal-anchor for type II membrane protein transmembrane segment at 469–489 (LLGLLLTWLLLLGLLFGLIAL) threads the bilayer. Over 490–1597 (AEEVRALKAR…KGGSWRLTSY (1108 aa)) the chain is Extracellular. 5 disordered regions span residues 562-857 (NGNL…SSSS), 907-927 (LRGPPGPPGPPGPPDLPFRVR), 970-1041 (LETY…ISSS), 1289-1316 (TAGVSSIPGPPGPPGPPGPRGPPGVSGA), and 1344-1394 (FIVG…SSMG). The segment at 568 to 1572 (SPGPKGDMGS…ELPLEEQPLA (1005 aa)) is triple-helical region. The segment covering 604-632 (PKGQKGSVGEPGMEGPMGQRGREGPMGPR) has biased composition (low complexity). The span at 665 to 674 (GPKGSGGSPG) shows a compositional bias: gly residues. Low complexity-rich tracts occupy residues 730–748 (PGAVGEPGAKGAVGPAGPD) and 774–796 (DPGKPGFTGPQGPQGLPGTPGRP). Residues 820–838 (PGPPGPPGAMGPPGPPGAP) show a composition bias toward pro residues. The segment covering 847 to 857 (AGESFMGSSSS) has biased composition (low complexity). Pro residues-rich tracts occupy residues 910 to 922 (PPGPPGPPGPPDL), 977 to 986 (PPGPPGPPGP), 1023 to 1035 (PGPPGPPGPPGPP), 1296 to 1310 (PGPPGPPGPPGPRGP), and 1348 to 1357 (PPGPPGPQGP). Over residues 1377 to 1393 (SSHSASVSRGSSYSSSM) the composition is skewed to low complexity. N-linked (GlcNAc...) asparagine glycosylation occurs at asparagine 1493. The tract at residues 1531 to 1566 (GHPALEGTREKKETKVTKSMRGGEREASPSSHELPL) is disordered. The segment covering 1537 to 1557 (GTREKKETKVTKSMRGGEREA) has biased composition (basic and acidic residues). The tract at residues 1573-1597 (SVLAMAYGVHVKISPKGGSWRLTSY) is nonhelical region (NC1).

In terms of assembly, homotrimers of alpha 1(XVII)chains. Interacts (via cytoplasmic region) with ITGB4 (via cytoplasmic region). Interacts (via cytoplasmic region) with DST (via N-terminus). Interacts (via N-terminus) with PLEC. Interacts (via cytoplasmic region) with DSP. The intracellular/endo domain is disulfide-linked. In terms of processing, prolines at the third position of the tripeptide repeating unit (G-X-Y) are hydroxylated in some or all of the chains. Post-translationally, the ectodomain is shedded from the surface of keratinocytes resulting in a 120-kDa soluble form, also named as 120 kDa linear IgA disease antigen homolog. The shedding is mediated by membrane-bound metalloproteases. As to expression, upper lamina lucidalhemidesmosome.

Its subcellular location is the cell junction. The protein resides in the hemidesmosome. It is found in the membrane. It localises to the secreted. The protein localises to the extracellular space. Its subcellular location is the extracellular matrix. The protein resides in the basement membrane. The 120 kDa linear IgA disease antigen homolog is an anchoring filament component involved in dermal-epidermal cohesion. The chain is Collagen alpha-1(XVII) chain (COL17A1) from Canis lupus familiaris (Dog).